The following is a 313-amino-acid chain: Putative S-adenosyl-L-methionine-dependent methyltransferase MUL_0706 (313 aa).

S-adenosyl-L-methionine is bound by residues Asp132 and 161–162 (DL).

Belongs to the UPF0677 family.

In terms of biological role, exhibits S-adenosyl-L-methionine-dependent methyltransferase activity. This is Putative S-adenosyl-L-methionine-dependent methyltransferase MUL_0706 from Mycobacterium ulcerans (strain Agy99).